Consider the following 292-residue polypeptide: uncharacterized protein (292 aa).

Residues 17-37 (SMDMFFFLFIFLLFIYPEMMM) traverse the membrane as a helical segment.

The protein to M.jannaschii MJ0137.

Its subcellular location is the membrane. This is an uncharacterized protein from Methanocaldococcus jannaschii (strain ATCC 43067 / DSM 2661 / JAL-1 / JCM 10045 / NBRC 100440) (Methanococcus jannaschii).